The sequence spans 464 residues: L-cystine uptake protein TcyP (464 aa).

A run of 10 helical transmembrane segments spans residues 3–23, 34–54, 73–93, 107–127, 184–204, 225–245, 263–283, 347–367, 371–391, and 395–415; these read TLLVGINVAVMLILVGVLYYM, VFTALGVGIIFGLILQFIYEP, YVKLLQMIVMPLILVSIISAF, GLIIGILILTTGIAAAVGIAA, PTSTISVVIFAAFIGIAFIGV, IVMRMVTLILRLTPYGVLALM, FVLASYVALIVMFVIHLLLIA, AGIYPAMLAMMVAPTVGIDPL, FILTLIAVVAISSFGVAGVGG, and FAALIVLSTMNLPIGIVALVI.

This sequence belongs to the dicarboxylate/amino acid:cation symporter (DAACS) (TC 2.A.23) family.

The protein localises to the membrane. Mediates uptake of L-cystine, the oxidized form of L-cysteine. The polypeptide is L-cystine uptake protein TcyP (Bacillus cereus (strain ATCC 10987 / NRS 248)).